A 230-amino-acid polypeptide reads, in one-letter code: A-type ATP synthase subunit D (230 aa).

A disordered region spans residues 204 to 230; that stretch reads AKKEEEEDALAAEEEAEEEPEAVTADD. The segment covering 208-230 has biased composition (acidic residues); it reads EEEDALAAEEEAEEEPEAVTADD.

Belongs to the V-ATPase D subunit family. In terms of assembly, has multiple subunits with at least A(3), B(3), C, D, E, F, H, I and proteolipid K(x).

It localises to the cell membrane. Its function is as follows. Component of the A-type ATP synthase that produces ATP from ADP in the presence of a proton gradient across the membrane. The chain is A-type ATP synthase subunit D from Haloarcula marismortui (strain ATCC 43049 / DSM 3752 / JCM 8966 / VKM B-1809) (Halobacterium marismortui).